The chain runs to 946 residues: Atos homolog protein A (946 aa).

The segment at 24 to 32 (ALLITEGRT) is transactivation domain 1 (TAD1). Residues 34-43 (EHSVKGRTEG) show a composition bias toward basic and acidic residues. 4 disordered regions span residues 34-58 (EHSVKGRTEGPHCPPAQLSQPAPNK), 246-271 (SVTQPHNSQDNDQNSAPVSQHAFTKP), 484-524 (FQSS…TGNQ), and 547-567 (SCTDSFHKPQKDNPKICSQKV). Polar residues-rich tracts occupy residues 247 to 267 (VTQPHNSQDNDQNSAPVSQHA) and 484 to 500 (FQSSGQSTVPSSNNENI). 2 stretches are compositionally biased toward basic and acidic residues: residues 503-517 (LPEKRDIKQSEHGEI) and 547-560 (SCTDSFHKPQKDNP). Positions 749–806 (LLGNFEESVLNYRFEPLGVVEGFTAEVGASGIFCPTHMTLPVKVSFYSVSDDNAPSPY) are required for macropage invasion. A transactivation domain 2 (TAD2) region spans residues 833–841 (FNPNKTVVK).

Belongs to the ATOS family.

The protein localises to the nucleus. Transcription regulator that syncronizes transcriptional and translational programs to promote macrophage invasion of tissues. This chain is Atos homolog protein A (atosa), found in Xenopus tropicalis (Western clawed frog).